The sequence spans 389 residues: Glycerol-3-phosphate dehydrogenase [NAD(+)] 2 (389 aa).

Residues Gly-40–Gly-45, Phe-128, Lys-151, and Ala-184 each bind NAD(+). Substrate is bound at residue Lys-151. Residue Lys-244 is the Proton acceptor of the active site. NAD(+)-binding residues include Arg-309 and Gln-338. Arg-309–Asn-310 contributes to the substrate binding site.

The protein belongs to the NAD-dependent glycerol-3-phosphate dehydrogenase family.

Its subcellular location is the cytoplasm. It carries out the reaction sn-glycerol 3-phosphate + NAD(+) = dihydroxyacetone phosphate + NADH + H(+). This is Glycerol-3-phosphate dehydrogenase [NAD(+)] 2 (GPD2) from Zygosaccharomyces rouxii.